We begin with the raw amino-acid sequence, 518 residues long: Phenylacetate 2-hydroxylase (518 aa).

C437 is a binding site for heme.

The protein belongs to the cytochrome P450 family.

The catalysed reaction is 2-phenylacetate + reduced [NADPH--hemoprotein reductase] + O2 = (2-hydroxyphenyl)acetate + oxidized [NADPH--hemoprotein reductase] + H2O + H(+). The protein operates within aromatic compound metabolism; phenylacetate degradation. Catalyzes the hydroxylation of phenylacetate to 2-hydroxyphenylacetate in the homogentisate pathway. The homogentisate pathway is used to catabolize phenylacetate and use it as a carbon source. Can also catalyze the hydroxylation of 3-hydroxyphenylacetate to 2,5-dihydroxyphenylacetate (homogentisate) at low efficiency. In Emericella nidulans (Aspergillus nidulans), this protein is Phenylacetate 2-hydroxylase (phacA).